The sequence spans 147 residues: Hemoglobin subunit gamma (147 aa).

Residues 3 to 147 enclose the Globin domain; sequence HFTAEEKAAI…VANALAYKYH (145 aa). Heme b is bound by residues histidine 64 and histidine 93.

Belongs to the globin family. As to quaternary structure, heterotetramer of two alpha chains and two gamma chains in fetal hemoglobin (Hb F). Red blood cells.

Gamma chains make up the fetal hemoglobin F, in combination with alpha chains. The sequence is that of Hemoglobin subunit gamma (HBG) from Elephas maximus (Indian elephant).